We begin with the raw amino-acid sequence, 1257 residues long: Liprin-alpha-2 (1257 aa).

3 disordered regions span residues 1-29 (MMCEVMPTINEDTPMSQRGSQSSGSDSDS), 231-265 (ASSEGSTESEHLEGMEPGQKVHEKRLSNGSIDSTD), and 438-463 (EGQLEEKNQELQRARQREKMNEEHNK). Low complexity predominate over residues 16–26 (SQRGSQSSGSD). Coiled coils occupy residues 29-154 (SHFE…SLRM), 185-541 (KALD…SLIE), and 643-695 (HSDA…GLNL). Ser-236 carries the phosphoserine modification. Thr-237 is modified (phosphothreonine). Positions 238–256 (ESEHLEGMEPGQKVHEKRL) are enriched in basic and acidic residues. The residue at position 239 (Ser-239) is a Phosphoserine. Ser-687 and Ser-689 each carry phosphoserine. Low complexity-rich tracts occupy residues 709 to 725 (TASSLASSSPPSGHSTP) and 798 to 813 (SSLSVSLEPESLGLGS). Disordered regions lie at residues 709–738 (TASSLASSSPPSGHSTPKLTPRSPAREMDR) and 790–834 (SSYH…KSSI). Residues Ser-817 and Ser-820 each carry the phosphoserine modification. 3 SAM domains span residues 898–964 (WDGP…MVSL), 1020–1084 (NHEW…LKRL), and 1108–1177 (WSND…LLAL). Residues 1081–1107 (LKRLNYDRKELERRREASQHEIKDVLV) adopt a coiled-coil conformation.

The protein belongs to the liprin family. Liprin-alpha subfamily. In terms of assembly, forms homodimers and heterodimers with liprins-alpha and liprins-beta. Interacts with the second PTPase domain of PTPRD, PTPRF and PTPRS. Interacts with KIF1A; the interaction decreases in presence of calcium. As to expression, expressed only in brain.

Its subcellular location is the cytoplasm. It localises to the cell surface. The protein localises to the cell projection. It is found in the dendritic spine. Alters PTPRF cellular localization and induces PTPRF clustering. May regulate the disassembly of focal adhesions. May localize receptor-like tyrosine phosphatases type 2A at specific sites on the plasma membrane, possibly regulating their interaction with the extracellular environment and their association with substrates. In neuronal cells, is a scaffolding protein in the dendritic spines which acts as immobile postsynaptic post able to recruit KIF1A-driven dense core vesicles to dendritic spines. The protein is Liprin-alpha-2 (PPFIA2) of Homo sapiens (Human).